The following is a 297-amino-acid chain: uncharacterized protein (297 aa).

The next 6 helical transmembrane spans lie at Phe-26–Ile-48, Asn-80–Phe-102, Leu-134–Gly-156, Leu-185–Ile-205, Leu-225–Tyr-247, and Leu-262–Tyr-284.

It localises to the cell membrane. This is an uncharacterized protein from Archaeoglobus fulgidus (strain ATCC 49558 / DSM 4304 / JCM 9628 / NBRC 100126 / VC-16).